A 209-amino-acid polypeptide reads, in one-letter code: ADP-ribose pyrophosphatase (209 aa).

Residues 28–29 (FF), 51–52 (RE), R56, and R79 each bind substrate. Residues 55–193 (ERGHAAVLLP…KIDNAASVIA (139 aa)) enclose the Nudix hydrolase domain. A96 lines the Mg(2+) pocket. The Nudix box motif lies at 97–118 (GMIEEGESVEDVARREAIEEAG). A substrate-binding site is contributed by M98. Mg(2+)-binding residues include E112 and E116. Substrate-binding positions include 133-135 (SPG) and E139. E162 serves as the catalytic Proton acceptor. E164 lines the Mg(2+) pocket.

It belongs to the Nudix hydrolase family. NudF subfamily. As to quaternary structure, homodimer. Mg(2+) serves as cofactor.

The enzyme catalyses ADP-D-ribose + H2O = D-ribose 5-phosphate + AMP + 2 H(+). Inhibited by phosphorylated compounds such as AMP, ADP, ATP, 3-phosphoglyceric acid and PPi. Not inhibited by orthophosphate. Activity is high in cells grown in low glucose concentrations and decreases dramatically as glucose concentration increases. In terms of biological role, acts on ADP-mannose and ADP-glucose as well as ADP-ribose. Prevents glycogen biosynthesis. The reaction catalyzed by this enzyme is a limiting step of the gluconeogenic process. This Escherichia coli O157:H7 protein is ADP-ribose pyrophosphatase (nudF).